The primary structure comprises 365 residues: Carbamoyl phosphate synthase small chain (365 aa).

CPSase stretches follow at residues 1–166 (MKRQ…PSPG) and 1–169 (MKRQ…GRGH). L-glutamine-binding residues include S45, G218, and G220. The 188-residue stretch at 170–357 (RVVLVDFGMK…LTMIENFKKE (188 aa)) folds into the Glutamine amidotransferase type-1 domain. The Nucleophile role is filled by C245. L-glutamine-binding residues include L246, Q249, N287, G289, and Y290. Active-site residues include H330 and E332.

The protein belongs to the CarA family. In terms of assembly, composed of two chains; the small (or glutamine) chain promotes the hydrolysis of glutamine to ammonia, which is used by the large (or ammonia) chain to synthesize carbamoyl phosphate. Tetramer of heterodimers (alpha,beta)4.

The enzyme catalyses hydrogencarbonate + L-glutamine + 2 ATP + H2O = carbamoyl phosphate + L-glutamate + 2 ADP + phosphate + 2 H(+). It catalyses the reaction L-glutamine + H2O = L-glutamate + NH4(+). The protein operates within amino-acid biosynthesis; L-arginine biosynthesis; carbamoyl phosphate from bicarbonate: step 1/1. Its pathway is pyrimidine metabolism; UMP biosynthesis via de novo pathway; (S)-dihydroorotate from bicarbonate: step 1/3. Small subunit of the glutamine-dependent carbamoyl phosphate synthetase (CPSase). CPSase catalyzes the formation of carbamoyl phosphate from the ammonia moiety of glutamine, carbonate, and phosphate donated by ATP, constituting the first step of 2 biosynthetic pathways, one leading to arginine and/or urea and the other to pyrimidine nucleotides. The small subunit (glutamine amidotransferase) binds and cleaves glutamine to supply the large subunit with the substrate ammonia. The polypeptide is Carbamoyl phosphate synthase small chain (Bacillus cereus (strain ATCC 14579 / DSM 31 / CCUG 7414 / JCM 2152 / NBRC 15305 / NCIMB 9373 / NCTC 2599 / NRRL B-3711)).